The primary structure comprises 217 residues: Fucoxanthin-chlorophyll a-c binding protein B, chloroplastic (217 aa).

The N-terminal 39 residues, 1–39, are a transit peptide targeting the chloroplast; that stretch reads MKSAVMAVACAAAPGFRGPSAFNGAALTTSAKACSAMKM. The next 3 membrane-spanning stretches (helical) occupy residues 81-101, 122-142, and 183-203; these read IAML…PGML, IPPA…LAVM, and GRAA…NNKP.

This sequence belongs to the fucoxanthin chlorophyll protein family. As to quaternary structure, the LHC complex of chromophytic algae is composed of fucoxanthin, chlorophyll A and C bound non-covalently by fucoxanthin chlorophyll proteins (FCPs). The ratio of pigments in this LHC is; fucoxanthin: chlorophyll C: chlorophyll A; (0.6-1): (0.1-0.3): (1).

Its subcellular location is the plastid. The protein localises to the chloroplast thylakoid membrane. The light-harvesting complex (LHC) functions as a light receptor, it captures and delivers excitation energy to photosystems with which it is closely associated. Energy is transferred from the carotenoid and chlorophyll C (or B) to chlorophyll A and the photosynthetic reaction centers where it is used to synthesize ATP and reducing power. The sequence is that of Fucoxanthin-chlorophyll a-c binding protein B, chloroplastic (FCPB) from Macrocystis pyrifera (Giant kelp).